Consider the following 1018-residue polypeptide: UPF0182 protein Francci3_3781 (1018 aa).

A run of 7 helical transmembrane segments spans residues 13-33 (TKVL…IAIF), 60-80 (ILLF…NIVL), 109-129 (MLLI…LSAA), 167-187 (FLLG…LLTH), 208-228 (AHIS…YYLD), 250-270 (AVLP…VLFI), and 283-303 (LGAG…PAIV). 2 stretches are compositionally biased toward low complexity: residues 886–896 (TTDAGQDGTPA) and 960–980 (SSPA…SVPA). 2 disordered regions span residues 886–920 (TTDA…AVGD) and 960–1018 (SSPA…PAPG). Residues 981-995 (SPVPASPAAKPPAPS) are compositionally biased toward pro residues.

This sequence belongs to the UPF0182 family.

It localises to the cell membrane. In Frankia casuarinae (strain DSM 45818 / CECT 9043 / HFP020203 / CcI3), this protein is UPF0182 protein Francci3_3781.